The chain runs to 249 residues: Enolase-phosphatase E1 (249 aa).

Residues Asp14 and Glu16 each coordinate Mg(2+). Substrate-binding positions include 141-142 (SS) and Lys175. Mg(2+) is bound at residue Asp200.

The protein belongs to the HAD-like hydrolase superfamily. MasA/MtnC family. Monomer. Requires Mg(2+) as cofactor.

The protein localises to the cytoplasm. It is found in the nucleus. The enzyme catalyses 5-methylsulfanyl-2,3-dioxopentyl phosphate + H2O = 1,2-dihydroxy-5-(methylsulfanyl)pent-1-en-3-one + phosphate. Its pathway is amino-acid biosynthesis; L-methionine biosynthesis via salvage pathway; L-methionine from S-methyl-5-thio-alpha-D-ribose 1-phosphate: step 3/6. The protein operates within amino-acid biosynthesis; L-methionine biosynthesis via salvage pathway; L-methionine from S-methyl-5-thio-alpha-D-ribose 1-phosphate: step 4/6. In terms of biological role, bifunctional enzyme that catalyzes the enolization of 2,3-diketo-5-methylthiopentyl-1-phosphate (DK-MTP-1-P) into the intermediate 2-hydroxy-3-keto-5-methylthiopentenyl-1-phosphate (HK-MTPenyl-1-P), which is then dephosphorylated to form the acireductone 1,2-dihydroxy-3-keto-5-methylthiopentene (DHK-MTPene). This chain is Enolase-phosphatase E1, found in Drosophila virilis (Fruit fly).